A 207-amino-acid polypeptide reads, in one-letter code: Crossover junction endodeoxyribonuclease RuvC (207 aa).

Catalysis depends on residues Asp11, Glu71, and Asp143. Positions 11, 71, and 143 each coordinate Mg(2+).

The protein belongs to the RuvC family. As to quaternary structure, homodimer which binds Holliday junction (HJ) DNA. The HJ becomes 2-fold symmetrical on binding to RuvC with unstacked arms; it has a different conformation from HJ DNA in complex with RuvA. In the full resolvosome a probable DNA-RuvA(4)-RuvB(12)-RuvC(2) complex forms which resolves the HJ. It depends on Mg(2+) as a cofactor.

The protein localises to the cytoplasm. The enzyme catalyses Endonucleolytic cleavage at a junction such as a reciprocal single-stranded crossover between two homologous DNA duplexes (Holliday junction).. Functionally, the RuvA-RuvB-RuvC complex processes Holliday junction (HJ) DNA during genetic recombination and DNA repair. Endonuclease that resolves HJ intermediates. Cleaves cruciform DNA by making single-stranded nicks across the HJ at symmetrical positions within the homologous arms, yielding a 5'-phosphate and a 3'-hydroxyl group; requires a central core of homology in the junction. The consensus cleavage sequence is 5'-(A/T)TT(C/G)-3'. Cleavage occurs on the 3'-side of the TT dinucleotide at the point of strand exchange. HJ branch migration catalyzed by RuvA-RuvB allows RuvC to scan DNA until it finds its consensus sequence, where it cleaves and resolves the cruciform DNA. In Methylobacterium radiotolerans (strain ATCC 27329 / DSM 1819 / JCM 2831 / NBRC 15690 / NCIMB 10815 / 0-1), this protein is Crossover junction endodeoxyribonuclease RuvC.